Consider the following 118-residue polypeptide: Large ribosomal subunit protein bL20 (118 aa).

This sequence belongs to the bacterial ribosomal protein bL20 family.

In terms of biological role, binds directly to 23S ribosomal RNA and is necessary for the in vitro assembly process of the 50S ribosomal subunit. It is not involved in the protein synthesizing functions of that subunit. This Erwinia tasmaniensis (strain DSM 17950 / CFBP 7177 / CIP 109463 / NCPPB 4357 / Et1/99) protein is Large ribosomal subunit protein bL20.